Reading from the N-terminus, the 339-residue chain is Anthranilate phosphoribosyltransferase (339 aa).

Residues glycine 80, glycine 83–aspartate 84, threonine 88, asparagine 90–threonine 93, lysine 108–serine 116, and serine 120 contribute to the 5-phospho-alpha-D-ribose 1-diphosphate site. Glycine 80 lines the anthranilate pocket. Serine 92 is a binding site for Mg(2+). Asparagine 111 contacts anthranilate. An anthranilate-binding site is contributed by arginine 166. 2 residues coordinate Mg(2+): aspartate 225 and glutamate 226.

It belongs to the anthranilate phosphoribosyltransferase family. In terms of assembly, homodimer. It depends on Mg(2+) as a cofactor.

It catalyses the reaction N-(5-phospho-beta-D-ribosyl)anthranilate + diphosphate = 5-phospho-alpha-D-ribose 1-diphosphate + anthranilate. It functions in the pathway amino-acid biosynthesis; L-tryptophan biosynthesis; L-tryptophan from chorismate: step 2/5. Catalyzes the transfer of the phosphoribosyl group of 5-phosphorylribose-1-pyrophosphate (PRPP) to anthranilate to yield N-(5'-phosphoribosyl)-anthranilate (PRA). In Caldanaerobacter subterraneus subsp. tengcongensis (strain DSM 15242 / JCM 11007 / NBRC 100824 / MB4) (Thermoanaerobacter tengcongensis), this protein is Anthranilate phosphoribosyltransferase.